Consider the following 430-residue polypeptide: Paraneoplastic antigen-like protein 8A (430 aa).

Positions tryptophan 219–proline 228 are enriched in basic and acidic residues. 3 disordered regions span residues tryptophan 219–tyrosine 270, aspartate 313–lysine 364, and glycine 392–leucine 430. A compositionally biased stretch (basic residues) spans leucine 232 to asparagine 250. The span at serine 261–tyrosine 270 shows a compositional bias: polar residues.

The protein belongs to the PNMA family.

This chain is Paraneoplastic antigen-like protein 8A, found in Mus musculus (Mouse).